A 21-amino-acid polypeptide reads, in one-letter code: Chlorophyllase type 2 (21 aa).

It belongs to the AB hydrolase superfamily. Lipase family.

The enzyme catalyses a chlorophyll + H2O = a chlorophyllide + phytol + H(+). It participates in porphyrin-containing compound metabolism; chlorophyll degradation. In terms of biological role, catalyzes the hydrolysis of ester bond in chlorophyll to yield chlorophyllide and phytol. The polypeptide is Chlorophyllase type 2 (Chenopodium album (Fat hen)).